We begin with the raw amino-acid sequence, 64 residues long: Thrombin-like enzyme collinein-4 (64 aa).

Intrachain disulfides connect Cys-5/Cys-23 and Cys-34/Cys-51.

As to quaternary structure, monomer. In terms of tissue distribution, expressed by the vanom gland.

It localises to the secreted. Thrombin-like snake venom serine protease. The protein is Thrombin-like enzyme collinein-4 of Crotalus durissus collilineatus (Brazilian rattlesnake).